A 765-amino-acid polypeptide reads, in one-letter code: Membrane metallo-endopeptidase-like 1 (765 aa).

The Cytoplasmic segment spans residues 1–19 (MVERAGWCRKKSPGFVEYG). The chain crosses the membrane as a helical; Signal-anchor for type II membrane protein span at residues 20-40 (LMVLLLLLLGAIVTLGVFYSI). The Lumenal portion of the chain corresponds to 41–765 (GKQLPLLTSL…MHPMKRCRIW (725 aa)). Residues 74–765 (ICTTPSCVIA…MHPMKRCRIW (692 aa)) form the Peptidase M13 domain. 5 disulfide bridges follow: C75/C80, C98/C750, C106/C710, C161/C425, and C636/C762. R121 contributes to the a peptide binding site. N163, N279, N303, and N336 each carry an N-linked (GlcNAc...) asparagine glycan. The stretch at 523-549 (FENGLQNLKNNAQRSLKKLREKVDQNL) forms a coiled coil. Zn(2+) is bound at residue H599. The active site involves E600. Zn(2+)-binding residues include H603 and E662. Residue D666 is the Proton donor of the active site. The N-linked (GlcNAc...) asparagine glycan is linked to N694.

Belongs to the peptidase M13 family. It depends on Zn(2+) as a cofactor. Post-translationally, N-glycosylated. Highly expressed in testis. Also expressed in ovary. Weakly or not expressed in brain, lung, heart, liver, kidney, adrenal gland and intestine.

The protein resides in the membrane. It is found in the secreted. It carries out the reaction Preferential cleavage of polypeptides between hydrophobic residues, particularly with Phe or Tyr at P1'.. With respect to regulation, inhibited by thiorphan and phosphoramidon. Metalloprotease involved in sperm function, possibly by modulating the processes of fertilization and early embryonic development. Degrades a broad variety of small peptides with a preference for peptides shorter than 3 kDa containing neutral bulky aliphatic or aromatic amino acid residues. Shares the same substrate specificity with MME and cleaves peptides at the same amide bond. This is Membrane metallo-endopeptidase-like 1 (Mmel1) from Mus musculus (Mouse).